The primary structure comprises 184 residues: Protein GrpE (184 aa).

A compositionally biased stretch (basic and acidic residues) spans 1 to 10 (MSQETEKDLE). The segment at 1–38 (MSQETEKDLEQTQNEELVEEAQSDEKKDQEVDPVEAAQ) is disordered.

It belongs to the GrpE family. As to quaternary structure, homodimer.

It localises to the cytoplasm. Participates actively in the response to hyperosmotic and heat shock by preventing the aggregation of stress-denatured proteins, in association with DnaK and GrpE. It is the nucleotide exchange factor for DnaK and may function as a thermosensor. Unfolded proteins bind initially to DnaJ; upon interaction with the DnaJ-bound protein, DnaK hydrolyzes its bound ATP, resulting in the formation of a stable complex. GrpE releases ADP from DnaK; ATP binding to DnaK triggers the release of the substrate protein, thus completing the reaction cycle. Several rounds of ATP-dependent interactions between DnaJ, DnaK and GrpE are required for fully efficient folding. The polypeptide is Protein GrpE (Sulfurovum sp. (strain NBC37-1)).